Here is a 426-residue protein sequence, read N- to C-terminus: Putative glutamate--cysteine ligase 2 (426 aa).

It belongs to the glutamate--cysteine ligase type 2 family. YbdK subfamily.

The enzyme catalyses L-cysteine + L-glutamate + ATP = gamma-L-glutamyl-L-cysteine + ADP + phosphate + H(+). ATP-dependent carboxylate-amine ligase which exhibits weak glutamate--cysteine ligase activity. The sequence is that of Putative glutamate--cysteine ligase 2 from Bradyrhizobium diazoefficiens (strain JCM 10833 / BCRC 13528 / IAM 13628 / NBRC 14792 / USDA 110).